We begin with the raw amino-acid sequence, 542 residues long: Chaperonin GroEL 3 (542 aa).

Residues 30 to 33 (TLGP), Lys-51, 87 to 91 (DGTTT), Gly-415, and Asp-494 each bind ATP. Residues 523-542 (KPKKKEPPMPAMPSDMGDYD) are disordered.

Belongs to the chaperonin (HSP60) family. In terms of assembly, forms a cylinder of 14 subunits composed of two heptameric rings stacked back-to-back. Interacts with the co-chaperonin GroES.

It is found in the cytoplasm. The enzyme catalyses ATP + H2O + a folded polypeptide = ADP + phosphate + an unfolded polypeptide.. Functionally, together with its co-chaperonin GroES, plays an essential role in assisting protein folding. The GroEL-GroES system forms a nano-cage that allows encapsulation of the non-native substrate proteins and provides a physical environment optimized to promote and accelerate protein folding. The polypeptide is Chaperonin GroEL 3 (Syntrophus aciditrophicus (strain SB)).